We begin with the raw amino-acid sequence, 476 residues long: Cysteine--tRNA ligase (476 aa).

A Zn(2+)-binding site is contributed by Cys-27. The short motif at 29-39 is the 'HIGH' region element; sequence ITPYDSVHVGH. Residues Cys-213, His-238, and Glu-242 each contribute to the Zn(2+) site. Residues 271-275 carry the 'KMSKS' region motif; sequence KMSKS. Lys-274 is an ATP binding site.

Belongs to the class-I aminoacyl-tRNA synthetase family. Zn(2+) serves as cofactor.

Its subcellular location is the cytoplasm. The catalysed reaction is tRNA(Cys) + L-cysteine + ATP = L-cysteinyl-tRNA(Cys) + AMP + diphosphate. The chain is Cysteine--tRNA ligase from Pyrobaculum arsenaticum (strain DSM 13514 / JCM 11321 / PZ6).